A 314-amino-acid chain; its full sequence is MFKKKMLAASLSVGLIAPLASPIQESRANTNIENIGDGAEVIKRTEDVSSKKWGVTQNVQFDFVKDKKYNKDALIVKMQGFINSRTSFSDVKGRGYELTKRLIWPFQYNIGLTTKDPNVSLINSITLPKTKIETTDVGQTLGYNIGGNFQSAPSIGGNGSFNYSKTISYTQKSYVSEVDKQNSKSVKWGVKANKFVTPDGKKFAHDRYLFVQSPNGPTGSAREYFAPDNQLPPLVQSGFNPSFITTLSHEKGSKLIRVNLKFSYGRNLDITYATLFPRTGIYAERKHNAFVNRNFVVRYKVNWKTHEIKVKGHN.

The first 28 residues, 1 to 28 (MFKKKMLAASLSVGLIAPLASPIQESRA), serve as a signal peptide directing secretion.

This sequence belongs to the aerolysin family. In terms of assembly, toxicity requires sequential binding and synergistic association of a class S and a class F component which form heterooligomeric complexes. LukE (class S) associates with LukD (class F). LukE can also associate with HlgB.

The protein localises to the secreted. Its function is as follows. Part of a bi-component leucotoxin that acts by forming pores in the membrane of the target cells. LukE-LukD is as effective as the Panton-Valentine leucocidin (PVL) for inducing dermonecrosis when injected in the rabbit skin, but not hemolytic and poorly leucotoxic on human blood cells compared to other leucotoxins expressed by S.aureus. This is Leucotoxin LukE (lukE) from Staphylococcus aureus.